A 235-amino-acid chain; its full sequence is Purine nucleoside phosphorylase DeoD-type (235 aa).

An a purine D-ribonucleoside-binding site is contributed by histidine 4. Phosphate-binding positions include glycine 20, arginine 24, arginine 43, and 87–90 (RVGT). A purine D-ribonucleoside-binding positions include 179 to 181 (EME) and 203 to 204 (SD). Aspartate 204 acts as the Proton donor in catalysis.

Belongs to the PNP/UDP phosphorylase family. As to quaternary structure, homohexamer; trimer of homodimers.

The catalysed reaction is a purine D-ribonucleoside + phosphate = a purine nucleobase + alpha-D-ribose 1-phosphate. It carries out the reaction a purine 2'-deoxy-D-ribonucleoside + phosphate = a purine nucleobase + 2-deoxy-alpha-D-ribose 1-phosphate. In terms of biological role, catalyzes the reversible phosphorolytic breakdown of the N-glycosidic bond in the beta-(deoxy)ribonucleoside molecules, with the formation of the corresponding free purine bases and pentose-1-phosphate. The polypeptide is Purine nucleoside phosphorylase DeoD-type (Clostridium perfringens (strain SM101 / Type A)).